A 119-amino-acid polypeptide reads, in one-letter code: Large ribosomal subunit protein bL20 (119 aa).

This sequence belongs to the bacterial ribosomal protein bL20 family.

Its function is as follows. Binds directly to 23S ribosomal RNA and is necessary for the in vitro assembly process of the 50S ribosomal subunit. It is not involved in the protein synthesizing functions of that subunit. The protein is Large ribosomal subunit protein bL20 of Dechloromonas aromatica (strain RCB).